Here is a 154-residue protein sequence, read N- to C-terminus: Ascorbate-specific PTS system EIIA component (154 aa).

Residues 6–150 form the PTS EIIA type-2 domain; that stretch reads SLAENKSIRL…QEVLDLIDRT (145 aa). His68 functions as the Tele-phosphohistidine intermediate in the catalytic mechanism. Residue His68 is modified to Phosphohistidine.

It is found in the cytoplasm. Its function is as follows. The phosphoenolpyruvate-dependent sugar phosphotransferase system (sugar PTS), a major carbohydrate active transport system, catalyzes the phosphorylation of incoming sugar substrates concomitantly with their translocation across the cell membrane. The enzyme II UlaABC PTS system is involved in ascorbate transport. This Shigella flexneri protein is Ascorbate-specific PTS system EIIA component (ulaC).